The chain runs to 484 residues: Protein nucleotidyltransferase YdiU (484 aa).

8 residues coordinate ATP: glycine 81, glycine 83, arginine 84, lysine 103, aspartate 115, glycine 116, arginine 166, and arginine 173. Aspartate 244 acts as the Proton acceptor in catalysis. 2 residues coordinate Mg(2+): asparagine 245 and aspartate 254. Aspartate 254 provides a ligand contact to ATP.

This sequence belongs to the SELO family. Mg(2+) is required as a cofactor. Mn(2+) serves as cofactor.

The catalysed reaction is L-seryl-[protein] + ATP = 3-O-(5'-adenylyl)-L-seryl-[protein] + diphosphate. It catalyses the reaction L-threonyl-[protein] + ATP = 3-O-(5'-adenylyl)-L-threonyl-[protein] + diphosphate. It carries out the reaction L-tyrosyl-[protein] + ATP = O-(5'-adenylyl)-L-tyrosyl-[protein] + diphosphate. The enzyme catalyses L-histidyl-[protein] + UTP = N(tele)-(5'-uridylyl)-L-histidyl-[protein] + diphosphate. The catalysed reaction is L-seryl-[protein] + UTP = O-(5'-uridylyl)-L-seryl-[protein] + diphosphate. It catalyses the reaction L-tyrosyl-[protein] + UTP = O-(5'-uridylyl)-L-tyrosyl-[protein] + diphosphate. In terms of biological role, nucleotidyltransferase involved in the post-translational modification of proteins. It can catalyze the addition of adenosine monophosphate (AMP) or uridine monophosphate (UMP) to a protein, resulting in modifications known as AMPylation and UMPylation. The protein is Protein nucleotidyltransferase YdiU of Shewanella loihica (strain ATCC BAA-1088 / PV-4).